Here is a 173-residue protein sequence, read N- to C-terminus: Lactoylglutathione lyase (173 aa).

Residues 24–170 enclose the VOC domain; that stretch reads VFNHTMLRVK…DGYWVEVIQP (147 aa). His27 contributes to the Ni(2+) binding site. Arg31 provides a ligand contact to substrate. Glu93 serves as a coordination point for Ni(2+). Positions 97, 116, and 120 each coordinate substrate. Residues His120 and Glu166 each coordinate Ni(2+). Glu166 serves as the catalytic Proton donor/acceptor.

This sequence belongs to the glyoxalase I family. As to quaternary structure, monomer. The cofactor is Ni(2+). Zn(2+) serves as cofactor.

The enzyme catalyses (R)-S-lactoylglutathione = methylglyoxal + glutathione. It participates in secondary metabolite metabolism; methylglyoxal degradation; (R)-lactate from methylglyoxal: step 1/2. In terms of biological role, catalyzes the conversion of hemimercaptal, formed from methylglyoxal and glutathione, to S-lactoylglutathione. This chain is Lactoylglutathione lyase (gloA), found in Pseudomonas putida (Arthrobacter siderocapsulatus).